Reading from the N-terminus, the 130-residue chain is Iron-sulfur cluster insertion protein ErpA (130 aa).

Iron-sulfur cluster contacts are provided by Cys46, Cys116, and Cys118.

The protein belongs to the HesB/IscA family. In terms of assembly, homodimer. The cofactor is iron-sulfur cluster.

Required for insertion of 4Fe-4S clusters for at least IspG. The chain is Iron-sulfur cluster insertion protein ErpA from Legionella pneumophila (strain Paris).